The chain runs to 560 residues: DNA ligase B (560 aa).

The active-site N6-AMP-lysine intermediate is the K124.

The protein belongs to the NAD-dependent DNA ligase family. LigB subfamily.

It carries out the reaction NAD(+) + (deoxyribonucleotide)n-3'-hydroxyl + 5'-phospho-(deoxyribonucleotide)m = (deoxyribonucleotide)n+m + AMP + beta-nicotinamide D-nucleotide.. Catalyzes the formation of phosphodiester linkages between 5'-phosphoryl and 3'-hydroxyl groups in double-stranded DNA using NAD as a coenzyme and as the energy source for the reaction. The polypeptide is DNA ligase B (Escherichia coli (strain ATCC 8739 / DSM 1576 / NBRC 3972 / NCIMB 8545 / WDCM 00012 / Crooks)).